Reading from the N-terminus, the 59-residue chain is Cytochrome c oxidase subunit 9, mitochondrial (59 aa).

Residues 2-8 are Mitochondrial matrix-facing; sequence TIAPITG. A helical membrane pass occupies residues 9 to 44; that stretch reads TIKRRVIMDIVLGFSLGGVMASYWWWGFHMDKINKR. Over 45–56 the chain is Mitochondrial intermembrane; sequence EKFYAELAERKK. Positions 57–59 are cleaved as a propeptide — removed in mature form; it reads QEN.

It belongs to the fungal cytochrome c oxidase subunit 7a family. In terms of assembly, component of the cytochrome c oxidase (complex IV, CIV), a multisubunit enzyme composed of 12 subunits. The complex is composed of a catalytic core of 3 subunits COX1, COX2 and COX3, encoded in the mitochondrial DNA, and 9 supernumerary subunits COX4, COX5A (or COX5B), COX6, COX7, COX8, COX9, COX12, COX13 and COX26, which are encoded in the nuclear genome. The complex exists as a monomer or a dimer and forms supercomplexes (SCs) in the inner mitochondrial membrane with a dimer of ubiquinol-cytochrome c oxidoreductase (cytochrome b-c1 complex, complex III, CIII), resulting in 2 different assemblies (supercomplexes III(2)IV and III(2)IV(2)).

The protein localises to the mitochondrion inner membrane. The protein operates within energy metabolism; oxidative phosphorylation. Its function is as follows. Component of the cytochrome c oxidase, the last enzyme in the mitochondrial electron transport chain which drives oxidative phosphorylation. The respiratory chain contains 3 multisubunit complexes succinate dehydrogenase (complex II, CII), ubiquinol-cytochrome c oxidoreductase (cytochrome b-c1 complex, complex III, CIII) and cytochrome c oxidase (complex IV, CIV), that cooperate to transfer electrons derived from NADH and succinate to molecular oxygen, creating an electrochemical gradient over the inner membrane that drives transmembrane transport and the ATP synthase. Cytochrome c oxidase is the component of the respiratory chain that catalyzes the reduction of oxygen to water. Electrons originating from reduced cytochrome c in the intermembrane space (IMS) are transferred via the dinuclear copper A center (CU(A)) of COX2 and heme A of COX1 to the active site in COX1, a binuclear center (BNC) formed by heme A3 and copper B (CU(B)). The BNC reduces molecular oxygen to 2 water molecules using 4 electrons from cytochrome c in the IMS and 4 protons from the mitochondrial matrix. In Saccharomyces cerevisiae (strain ATCC 204508 / S288c) (Baker's yeast), this protein is Cytochrome c oxidase subunit 9, mitochondrial (COX9).